Here is a 524-residue protein sequence, read N- to C-terminus: 2,3-bisphosphoglycerate-independent phosphoglycerate mutase (524 aa).

Mn(2+) contacts are provided by Asp-13 and Ser-63. Ser-63 acts as the Phosphoserine intermediate in catalysis. Residues His-124, 154–155 (RD), Arg-186, Arg-192, 262–265 (RADR), and Lys-337 each bind substrate. Mn(2+) contacts are provided by Asp-404, His-408, Asp-445, His-446, and His-464.

The protein belongs to the BPG-independent phosphoglycerate mutase family. In terms of assembly, monomer. Mn(2+) serves as cofactor.

The enzyme catalyses (2R)-2-phosphoglycerate = (2R)-3-phosphoglycerate. The protein operates within carbohydrate degradation; glycolysis; pyruvate from D-glyceraldehyde 3-phosphate: step 3/5. Its function is as follows. Catalyzes the interconversion of 2-phosphoglycerate and 3-phosphoglycerate. The chain is 2,3-bisphosphoglycerate-independent phosphoglycerate mutase from Thermomicrobium roseum (strain ATCC 27502 / DSM 5159 / P-2).